The sequence spans 490 residues: Pup--protein ligase (490 aa).

Glu-9 is a Mg(2+) binding site. Arg-53 lines the ATP pocket. Tyr-55 is a Mg(2+) binding site. The active-site Proton acceptor is Asp-57. Glu-63 is a Mg(2+) binding site. Ser-66 contributes to the ATP binding site. Residues 160 to 181 (KTHPNGGPVPGSTDPASSTGVP) are disordered. Trp-441 is a binding site for ATP.

The protein belongs to the Pup ligase/Pup deamidase family. Pup-conjugating enzyme subfamily.

The enzyme catalyses ATP + [prokaryotic ubiquitin-like protein]-L-glutamate + [protein]-L-lysine = ADP + phosphate + N(6)-([prokaryotic ubiquitin-like protein]-gamma-L-glutamyl)-[protein]-L-lysine.. It functions in the pathway protein degradation; proteasomal Pup-dependent pathway. The protein operates within protein modification; protein pupylation. Its function is as follows. Catalyzes the covalent attachment of the prokaryotic ubiquitin-like protein modifier Pup to the proteasomal substrate proteins, thereby targeting them for proteasomal degradation. This tagging system is termed pupylation. The ligation reaction involves the side-chain carboxylate of the C-terminal glutamate of Pup and the side-chain amino group of a substrate lysine. This Rothia mucilaginosa (strain DY-18) (Stomatococcus mucilaginosus) protein is Pup--protein ligase.